Reading from the N-terminus, the 487-residue chain is Glycogen synthase 1 (487 aa).

ADP-alpha-D-glucose is bound at residue lysine 15.

Belongs to the glycosyltransferase 1 family. Bacterial/plant glycogen synthase subfamily.

It carries out the reaction [(1-&gt;4)-alpha-D-glucosyl](n) + ADP-alpha-D-glucose = [(1-&gt;4)-alpha-D-glucosyl](n+1) + ADP + H(+). It participates in glycan biosynthesis; glycogen biosynthesis. In terms of biological role, synthesizes alpha-1,4-glucan chains using ADP-glucose. The sequence is that of Glycogen synthase 1 from Nitrosococcus oceani (strain ATCC 19707 / BCRC 17464 / JCM 30415 / NCIMB 11848 / C-107).